Here is a 205-residue protein sequence, read N- to C-terminus: Thymidylate kinase (205 aa).

10-17 (GTEGVGKS) lines the ATP pocket.

The protein belongs to the thymidylate kinase family.

The enzyme catalyses dTMP + ATP = dTDP + ADP. Functionally, phosphorylation of dTMP to form dTDP in both de novo and salvage pathways of dTTP synthesis. This is Thymidylate kinase from Teredinibacter turnerae (strain ATCC 39867 / T7901).